Here is a 251-residue protein sequence, read N- to C-terminus: Cell division protein ZapD (251 aa).

Belongs to the ZapD family. Interacts with FtsZ.

Its subcellular location is the cytoplasm. Cell division factor that enhances FtsZ-ring assembly. Directly interacts with FtsZ and promotes bundling of FtsZ protofilaments, with a reduction in FtsZ GTPase activity. This is Cell division protein ZapD from Burkholderia multivorans (strain ATCC 17616 / 249).